Consider the following 231-residue polypeptide: Ribonuclease P protein component 3 (231 aa).

The protein belongs to the eukaryotic/archaeal RNase P protein component 3 family. As to quaternary structure, consists of a catalytic RNA component and at least 4-5 protein subunits.

The protein resides in the cytoplasm. It catalyses the reaction Endonucleolytic cleavage of RNA, removing 5'-extranucleotides from tRNA precursor.. Its function is as follows. Part of ribonuclease P, a protein complex that generates mature tRNA molecules by cleaving their 5'-ends. The polypeptide is Ribonuclease P protein component 3 (Methanococcus maripaludis (strain C5 / ATCC BAA-1333)).